The chain runs to 520 residues: Maturase K (520 aa).

The protein belongs to the intron maturase 2 family. MatK subfamily.

It is found in the plastid. Its subcellular location is the chloroplast. Its function is as follows. Usually encoded in the trnK tRNA gene intron. Probably assists in splicing its own and other chloroplast group II introns. This is Maturase K from Liriope muscari (Big blue lilyturf).